A 309-amino-acid polypeptide reads, in one-letter code: GTP cyclohydrolase FolE2 (309 aa).

It belongs to the GTP cyclohydrolase IV family.

The catalysed reaction is GTP + H2O = 7,8-dihydroneopterin 3'-triphosphate + formate + H(+). The protein operates within cofactor biosynthesis; 7,8-dihydroneopterin triphosphate biosynthesis; 7,8-dihydroneopterin triphosphate from GTP: step 1/1. Functionally, converts GTP to 7,8-dihydroneopterin triphosphate. The polypeptide is GTP cyclohydrolase FolE2 (Serratia proteamaculans (strain 568)).